The chain runs to 297 residues: Salivary glue protein Sgs-4 (297 aa).

A signal peptide spans 1–21; it reads MRLELLVVLLVGLAALAPSGS. 21 consecutive repeat copies span residues 26 to 32, 33 to 39, 40 to 46, 47 to 53, 54 to 60, 61 to 67, 68 to 74, 75 to 81, 82 to 88, 89 to 95, 96 to 102, 103 to 109, 110 to 116, 117 to 123, 124 to 130, 131 to 137, 138 to 144, 145 to 151, 152 to 158, 159 to 165, and 166 to 172. Positions 26-84 are disordered; sequence TEPPRCETEPPRCETEPPRCETEPPRCETEPPRCETTTPKCETTPPTCRTEPPTCKTEP. Residues 26-179 are 22 X 7 AA approximate tandem repeats of T-[ETK]-[PT]-P-[RKT]-C-[ERK]; the sequence is TEPPRCETEP…TCKTEPPCEK (154 aa). A compositionally biased stretch (basic and acidic residues) spans 27 to 58; it reads EPPRCETEPPRCETEPPRCETEPPRCETEPPR. Positions 59 to 84 are enriched in low complexity; sequence CETTTPKCETTPPTCRTEPPTCKTEP. Over residues 141–174 the composition is skewed to low complexity; it reads PTCKTEPPTCRTEPPTCKTEPPTCKTEPPTCKTE. 2 disordered regions span residues 141–218 and 243–297; these read PTCK…SGCG and PDSK…KGGC. One copy of the 22; approximate repeat lies at 173–179; sequence TEPPCEK. 2 stretches are compositionally biased toward basic residues: residues 181 to 208 and 282 to 291; these read CTKRIKRHRTKRTKRSKSTKKIVHHHNR and NTTKKPRKTQ.

As to expression, salivary gland.

The protein resides in the secreted. This Drosophila melanogaster (Fruit fly) protein is Salivary glue protein Sgs-4 (Sgs4).